Consider the following 554-residue polypeptide: Dihydroxy-acid dehydratase (554 aa).

Aspartate 78 contacts Mg(2+). Residue cysteine 119 participates in [2Fe-2S] cluster binding. Mg(2+) contacts are provided by aspartate 120 and lysine 121. At lysine 121 the chain carries N6-carboxylysine. Cysteine 192 is a [2Fe-2S] cluster binding site. Glutamate 443 provides a ligand contact to Mg(2+). Serine 469 functions as the Proton acceptor in the catalytic mechanism.

The protein belongs to the IlvD/Edd family. As to quaternary structure, homodimer. The cofactor is [2Fe-2S] cluster. Requires Mg(2+) as cofactor.

It catalyses the reaction (2R)-2,3-dihydroxy-3-methylbutanoate = 3-methyl-2-oxobutanoate + H2O. It carries out the reaction (2R,3R)-2,3-dihydroxy-3-methylpentanoate = (S)-3-methyl-2-oxopentanoate + H2O. Its pathway is amino-acid biosynthesis; L-isoleucine biosynthesis; L-isoleucine from 2-oxobutanoate: step 3/4. The protein operates within amino-acid biosynthesis; L-valine biosynthesis; L-valine from pyruvate: step 3/4. Functionally, functions in the biosynthesis of branched-chain amino acids. Catalyzes the dehydration of (2R,3R)-2,3-dihydroxy-3-methylpentanoate (2,3-dihydroxy-3-methylvalerate) into 2-oxo-3-methylpentanoate (2-oxo-3-methylvalerate) and of (2R)-2,3-dihydroxy-3-methylbutanoate (2,3-dihydroxyisovalerate) into 2-oxo-3-methylbutanoate (2-oxoisovalerate), the penultimate precursor to L-isoleucine and L-valine, respectively. The protein is Dihydroxy-acid dehydratase of Shouchella clausii (strain KSM-K16) (Alkalihalobacillus clausii).